Consider the following 319-residue polypeptide: Aspartate carbamoyltransferase catalytic subunit (319 aa).

Carbamoyl phosphate-binding residues include Arg-65 and Thr-66. Lys-93 contributes to the L-aspartate binding site. Arg-115, His-149, and Gln-152 together coordinate carbamoyl phosphate. L-aspartate is bound by residues Arg-182 and Arg-237. Gly-278 and Pro-279 together coordinate carbamoyl phosphate.

The protein belongs to the aspartate/ornithine carbamoyltransferase superfamily. ATCase family. In terms of assembly, heterododecamer (2C3:3R2) of six catalytic PyrB chains organized as two trimers (C3), and six regulatory PyrI chains organized as three dimers (R2).

It carries out the reaction carbamoyl phosphate + L-aspartate = N-carbamoyl-L-aspartate + phosphate + H(+). Its pathway is pyrimidine metabolism; UMP biosynthesis via de novo pathway; (S)-dihydroorotate from bicarbonate: step 2/3. Its function is as follows. Catalyzes the condensation of carbamoyl phosphate and aspartate to form carbamoyl aspartate and inorganic phosphate, the committed step in the de novo pyrimidine nucleotide biosynthesis pathway. The protein is Aspartate carbamoyltransferase catalytic subunit of Dechloromonas aromatica (strain RCB).